The primary structure comprises 230 residues: Large ribosomal subunit protein uL1 (230 aa).

Belongs to the universal ribosomal protein uL1 family. Part of the 50S ribosomal subunit.

Binds directly to 23S rRNA. The L1 stalk is quite mobile in the ribosome, and is involved in E site tRNA release. Functionally, protein L1 is also a translational repressor protein, it controls the translation of the L11 operon by binding to its mRNA. In Acholeplasma laidlawii (strain PG-8A), this protein is Large ribosomal subunit protein uL1.